A 316-amino-acid polypeptide reads, in one-letter code: tRNA pseudouridine synthase B (316 aa).

The active-site Nucleophile is Asp-47.

It belongs to the pseudouridine synthase TruB family. Type 1 subfamily.

The enzyme catalyses uridine(55) in tRNA = pseudouridine(55) in tRNA. Responsible for synthesis of pseudouridine from uracil-55 in the psi GC loop of transfer RNAs. The protein is tRNA pseudouridine synthase B of Aliivibrio fischeri (strain MJ11) (Vibrio fischeri).